Reading from the N-terminus, the 654-residue chain is Endoplasmic reticulum chaperone BiP (654 aa).

Residues 1 to 18 (MKLSLVAAMLLLLSAARA) form the signal peptide. Residues 1–80 (MKLSLVAAML…EGERLIGDAA (80 aa)) are required for interaction with ELAPOR1. ATP is bound at residue 36 to 39 (GTTY). At serine 86 the chain carries Phosphoserine. Lysine 96 lines the ATP pocket. Lysine 125 carries the N6-acetyllysine modification. The tract at residues 125-280 (KPYIQVDIGG…KKKTGKDVRK (156 aa)) is nucleotide-binding (NBD). Tyrosine 160 is modified (3'-nitrotyrosine). Lysine 213 carries the post-translational modification N6-acetyllysine. Residue 227–229 (GGT) coordinates ATP. Position 271 is an N6-acetyllysine (lysine 271). 293-300 (EKAKRALS) is a binding site for ATP. An N6-acetyllysine modification is found at lysine 326. A Glycyl lysine isopeptide (Lys-Gly) (interchain with G-Cter in SUMO2) cross-link involves residue lysine 352. At lysine 353 the chain carries N6-acetyllysine; alternate. A Glycyl lysine isopeptide (Lys-Gly) (interchain with G-Cter in SUMO1); alternate cross-link involves residue lysine 353. 364-367 (GSTR) provides a ligand contact to ATP. Residues 409–419 (QDTGDLVLLDV) are interdomain linker. Residues 420-500 (CPLTLGIETV…PRGVPQIEVT (81 aa)) form a substrate-binding (SBD) region. An N6-succinyllysine modification is found at lysine 447. Arginine 492 carries the post-translational modification Omega-N-methylarginine. Threonine 518 carries the O-AMP-threonine; alternate modification. Threonine 518 carries the phosphothreonine; alternate modification. Lysine 585 carries the post-translational modification N6,N6,N6-trimethyllysine; by METTL21A; in vitro. Residue lysine 585 is modified to N6,N6-dimethyllysine; alternate. Position 585 is an N6-methyllysine; alternate (lysine 585). Lysine 591 is modified (N6-methyllysine). Residues 633-654 (KLYGSAGPPPTGEEDTAEKDEL) are disordered. Phosphothreonine occurs at positions 643 and 648. Positions 644–654 (GEEDTAEKDEL) are enriched in acidic residues. Positions 651-654 (KDEL) match the Prevents secretion from ER motif.

This sequence belongs to the heat shock protein 70 family. As to quaternary structure, monomer and homooligomer; homooligomerization via the interdomain linker inactivates the chaperone activity and acts as a storage of HSPA5/BiP molecules. Interacts with DNAJC1 (via J domain). Component of an EIF2 complex at least composed of CELF1/CUGBP1, CALR, CALR3, EIF2S1, EIF2S2, HSP90B1 and HSPA5. Part of a large chaperone multiprotein complex comprising DNAJB11, HSP90B1, HSPA5, HYOU, PDIA2, PDIA4, PDIA6, PPIB, SDF2L1, UGGT1 and very small amounts of ERP29, but not, or at very low levels, CALR nor CANX. Interacts with TMEM132A and TRIM21. May form a complex with ERLEC1, OS9, SEL1L and SYVN1. Interacts with DNAJC10. Interacts with DNAJB9/ERdj4; leading to recruit HSPA5/BiP to ERN1/IRE1. Interacts with ERN1/IRE1 (via luminal domain); the interaction takes place following interaction with DNAJB9/ERdj4 and leads to inactivate ERN1/IRE1, the interaction also competitively inhibits ERN1 interaction with MANF. Interacts directly with MANF (via SAP domain); the interaction inhibits ATP binding to HSPA5/BiP and subsequent nucleotide exchange. Interacts with EIF2AK3/PERK (via luminal domain); interaction leads to inactivate EIF2AK3/PERK. Interacts with MX1. Interacts with METTL23. Interacts with CEMIP; the interaction induces calcium leakage from the endoplasmic reticulum and cell migration. Interacts with PCSK4 form; the interaction takes place in the endoplasmic reticulum. Interacts with CIPC. Interacts with CCDC88B (via C-terminus); the interaction opposes ERN1-mediated JNK activation, protecting against apoptosis. Interacts with INPP5K; necessary for INPP5K localization at the endoplasmic reticulum. Interacts with MANF; the interaction is direct. Interacts with LOXL2; leading to activate the ERN1/IRE1-XBP1 pathway of the unfolded protein response. Interacts with CLU under stressed condition; interaction increases CLU protein stability; facilitates its retrotranslocation and redistribution to the mitochondria; cooperatively suppress stress-induced apoptosis by stabilizing mitochondrial membrane integrity. Interacts with CCDC47. Interacts with CLN3. Interacts with ELAPOR1; may regulate the function of HSPA5 in apoptosis and cell proliferation. Interacts with CASP7. Interacts with ILDR2; the interaction stabilizes ILDR2 expression. Interacts with ADAM7. In terms of assembly, (Microbial infection) Interacts with Japanese encephalitis virus envelope protein E. (Microbial infection) Interacts with R.delemar invasin CotH3 on the surface of nasal epithelial cells. Interacts with R.delemar invasin CotH2. As to quaternary structure, (Microbial infection) Interacts with Zika virus envelope protein E and non-structural protein 1 in a chaperone-client manner. Post-translationally, AMPylated by FICD. In unstressed cells, AMPylation at Thr-518 by FICD inactivates the chaperome activity: AMPylated form is locked in a relatively inert state and only weakly stimulated by J domain-containing proteins. In response to endoplasmic reticulum stress, de-AMPylation by the same protein, FICD, restores the chaperone activity.

It is found in the endoplasmic reticulum lumen. It localises to the melanosome. Its subcellular location is the cytoplasm. The protein resides in the cell surface. It carries out the reaction ATP + H2O = ADP + phosphate + H(+). Its activity is regulated as follows. The chaperone activity is regulated by ATP-induced allosteric coupling of the nucleotide-binding (NBD) and substrate-binding (SBD) domains. In the ADP-bound and nucleotide-free (apo) states, the two domains have little interaction. In contrast, in the ATP-bound state the two domains are tightly coupled, which results in drastically accelerated kinetics in both binding and release of polypeptide substrates. J domain-containing co-chaperones (DNAJB9/ERdj4 or DNAJC10/ERdj5) stimulate the ATPase activity and are required for efficient substrate recognition by HSPA5/BiP. Homooligomerization inactivates participating HSPA5/BiP protomers and probably act as reservoirs to store HSPA5/BiP molecules when they are not needed by the cell. Functionally, endoplasmic reticulum chaperone that plays a key role in protein folding and quality control in the endoplasmic reticulum lumen. Involved in the correct folding of proteins and degradation of misfolded proteins via its interaction with DNAJC10/ERdj5, probably to facilitate the release of DNAJC10/ERdj5 from its substrate. Acts as a key repressor of the EIF2AK3/PERK and ERN1/IRE1-mediated unfolded protein response (UPR). In the unstressed endoplasmic reticulum, recruited by DNAJB9/ERdj4 to the luminal region of ERN1/IRE1, leading to disrupt the dimerization of ERN1/IRE1, thereby inactivating ERN1/IRE1. Also binds and inactivates EIF2AK3/PERK in unstressed cells. Accumulation of misfolded protein in the endoplasmic reticulum causes release of HSPA5/BiP from ERN1/IRE1 and EIF2AK3/PERK, allowing their homodimerization and subsequent activation. Plays an auxiliary role in post-translational transport of small presecretory proteins across endoplasmic reticulum (ER). May function as an allosteric modulator for SEC61 channel-forming translocon complex, likely cooperating with SEC62 to enable the productive insertion of these precursors into SEC61 channel. Appears to specifically regulate translocation of precursors having inhibitory residues in their mature region that weaken channel gating. May also play a role in apoptosis and cell proliferation. (Microbial infection) Plays an important role in viral binding to the host cell membrane and entry for several flaviruses such as Dengue virus, Zika virus and Japanese encephalitis virus. Acts as a component of the cellular receptor for Dengue virus serotype 2/DENV-2 on human liver cells. Its function is as follows. (Microbial infection) Acts as a receptor for CotH proteins expressed by fungi of the order mucorales, the causative agent of mucormycosis, which plays an important role in epithelial cell invasion by the fungi. Acts as a receptor for R.delemar CotH3 in nasal epithelial cells, which may be an early step in rhinoorbital/cerebral mucormycosis (RCM) disease progression. This chain is Endoplasmic reticulum chaperone BiP, found in Homo sapiens (Human).